The chain runs to 234 residues: Interleukin-27 subunit alpha (234 aa).

Positions 1 to 28 are cleaved as a signal peptide; it reads MGQVTGDLGWRLSLLLLPLLLVQAGSWG. A glycan (N-linked (GlcNAc...) asparagine) is linked at Asn-85. The tract at residues 160-185 is disordered; the sequence is KEEEDKEEEEEEEEEEKKLPLGALGG. Positions 161 to 174 are enriched in acidic residues; sequence EEEDKEEEEEEEEE.

Belongs to the IL-6 superfamily. As to quaternary structure, heterodimer with EBI3; not disulfide-linked. This heterodimer is known as interleukin IL-27. In terms of processing, O-glycosylated. As to expression, expressed in macrophages and dendritic cells.

The protein localises to the secreted. Its function is as follows. Associates with EBI3 to form the IL-27 interleukin, a heterodimeric cytokine which functions in innate immunity. IL-27 has pro- and anti-inflammatory properties, that can regulate T-helper cell development, suppress T-cell proliferation, stimulate cytotoxic T-cell activity, induce isotype switching in B-cells, and that has diverse effects on innate immune cells. Among its target cells are CD4 T-helper cells which can differentiate in type 1 effector cells (TH1), type 2 effector cells (TH2) and IL17 producing helper T-cells (TH17). It drives rapid clonal expansion of naive but not memory CD4 T-cells. It also strongly synergizes with IL-12 to trigger interferon-gamma/IFN-gamma production of naive CD4 T-cells, binds to the cytokine receptor WSX-1/TCCR which appears to be required but not sufficient for IL-27-mediated signal transduction. IL-27 potentiate the early phase of TH1 response and suppress TH2 and TH17 differentiation. It induces the differentiation of TH1 cells via two distinct pathways, p38 MAPK/TBX21- and ICAM1/ITGAL/ERK-dependent pathways. It also induces STAT1, STAT3, STAT4 and STAT5 phosphorylation and activates TBX21/T-Bet via STAT1 with resulting IL12RB2 up-regulation, an event crucial to TH1 cell commitment. It suppresses the expression of GATA3, the inhibitor TH1 cells development. In CD8 T-cells, it activates STATs as well as GZMB. IL-27 reveals to be a potent inhibitor of TH17 cell development and of IL-17 production. Indeed IL27 alone is also able to inhibit the production of IL17 by CD4 and CD8 T-cells. While IL-27 suppressed the development of pro-inflammatory Th17 cells via STAT1, it inhibits the development of anti-inflammatory inducible regulatory T-cells, iTreg, independently of STAT1. IL-27 also has an effect on cytokine production, it suppresses pro-inflammatory cytokine production such as IL2, IL4, IL5 and IL6 and activates suppressors of cytokine signaling such as SOCS1 and SOCS3. Apart from suppression of cytokine production, IL-27 also antagonizes the effects of some cytokines such as IL6 through direct effects on T-cells. Another important role of IL-27 is its antitumor activity as well as its antiangiogenic activity with activation of production of antiangiogenic chemokines such as IP-10/CXCL10 and MIG/CXCL9. This chain is Interleukin-27 subunit alpha (Il27), found in Mus musculus (Mouse).